Reading from the N-terminus, the 224-residue chain is ATP-dependent Clp protease proteolytic subunit 1 (224 aa).

S120 functions as the Nucleophile in the catalytic mechanism. Residue H145 is part of the active site.

It belongs to the peptidase S14 family. As to quaternary structure, fourteen ClpP subunits assemble into 2 heptameric rings which stack back to back to give a disk-like structure with a central cavity, resembling the structure of eukaryotic proteasomes.

It is found in the cytoplasm. The catalysed reaction is Hydrolysis of proteins to small peptides in the presence of ATP and magnesium. alpha-casein is the usual test substrate. In the absence of ATP, only oligopeptides shorter than five residues are hydrolyzed (such as succinyl-Leu-Tyr-|-NHMec, and Leu-Tyr-Leu-|-Tyr-Trp, in which cleavage of the -Tyr-|-Leu- and -Tyr-|-Trp bonds also occurs).. Cleaves peptides in various proteins in a process that requires ATP hydrolysis. Has a chymotrypsin-like activity. Plays a major role in the degradation of misfolded proteins. The protein is ATP-dependent Clp protease proteolytic subunit 1 of Prochlorococcus marinus (strain MIT 9313).